A 25-amino-acid polypeptide reads, in one-letter code: KYYGNGVTCGKHSXSVDWSKATTNI.

A disulfide bond links C9 and X14.

Its subcellular location is the secreted. Functionally, bactericidal activity against a wide range of pathogenic bacteria, including Bacillus spp., Enterococcus spp., Listeria spp., Staphylococcus spp. and Streptococcus spp. Has no activity against Lactobacillus salivarius, Staphylococcus aureus, Streptococcus pyogenes and Streptococcus suis. The protein is Bacteriocin mutacin F-59.1 of Streptococcus mutans.